The primary structure comprises 841 residues: GRIP1-associated protein 1 (841 aa).

Ala-2 carries the post-translational modification N-acetylalanine. 2 coiled-coil regions span residues 4–161 (ALSE…YGKE) and 208–641 (EQLQ…NSKS). 2 disordered regions span residues 532–551 (AEESLQQQQQEQEEALKQCR) and 558–580 (LKGKEEELQDVRDQLEQAQEERD). 8 positions are modified to phosphoserine: Ser-655, Ser-666, Ser-668, Ser-669, Ser-688, Ser-690, Ser-691, and Ser-692. The interval 681-706 (SSAVPARSLSSSPQAQPPRPAELSDE) is disordered. Residues 682–694 (SAVPARSLSSSPQ) are compositionally biased toward low complexity. Coiled-coil stretches lie at residues 701–735 (AELSDEEVAELFQRLAETQQEKWMLEEKVKHLEVS) and 785–814 (DENLREMNKKLQNMLEEQLTKNMHLHKDME).

In terms of assembly, interacts with GRIP1, GRIP2 and AMPA receptors. Interacts (via C-terminus) with MAPK8/JNK1 and MAP3K1/MEKK1; the interaction promotes MAP3K1-mediated phosphorylation of MAPK8. Interacts (via N-terminus) with RAB4A (in GTP-bound form). Interacts (via C-terminus) with STX12. In terms of processing, proteolytically cleaved by caspase-3. A minor C-terminal proteolytic fragment of 30 kDa is produced. Proteolytic cleavage is required for JNK signaling activation.

It is found in the early endosome membrane. The protein resides in the recycling endosome membrane. It localises to the cell projection. The protein localises to the axon. Its subcellular location is the dendrite. It is found in the synapse. Functionally, regulates the endosomal recycling back to the neuronal plasma membrane, possibly by connecting early and late recycling endosomal domains and promoting segregation of recycling endosomes from early endosomal membranes. Involved in the localization of recycling endosomes to dendritic spines, thereby playing a role in the maintenance of dendritic spine morphology. Required for the activity-induced AMPA receptor recycling to dendrite membranes and for long-term potentiation and synaptic plasticity. Functions as a scaffold protein to facilitate MAP3K1/MEKK1-mediated activation of the JNK1 kinase by phosphorylation, possibly by bringing MAP3K1/MEKK1 and JNK1 in close proximity. This Homo sapiens (Human) protein is GRIP1-associated protein 1.